We begin with the raw amino-acid sequence, 294 residues long: MQGRKGANTLGRSLEIDLLRSFVVIAEVRALSRAAARVGRTQSALSQQMKRLEDIVDQPLFQRTGRGVVLTHPGERLLVHAQRILRQHDEAMADLCGTGLTGTIRFGCPDDYAEVFLPPLLRQFSSQHPQAIVEIVCGPTPRLLEQLEKRAVDLAMISLPDDGANDDIIRREQLVWIGYPGLEPAHFDPLPLALSDPDTLDHIAACDALHRAGRDYRVAYASSSLAGLIALVRSGQAFAVMTQTAVPADLAIVNGDPRLPPLPAVGITLKFDRKRPSHLTAAFAEHIRAVLPML.

The HTH lysR-type domain maps to 14 to 70 (LEIDLLRSFVVIAEVRALSRAAARVGRTQSALSQQMKRLEDIVDQPLFQRTGRGVVL). A DNA-binding region (H-T-H motif) is located at residues 31 to 50 (LSRAAARVGRTQSALSQQMK).

The protein belongs to the LysR transcriptional regulatory family.

This chain is HTH-type transcriptional regulator DgdR (dgdR), found in Burkholderia cepacia (Pseudomonas cepacia).